The following is a 119-amino-acid chain: Holo-[acyl-carrier-protein] synthase (119 aa).

Mg(2+) contacts are provided by D8 and E58.

It belongs to the P-Pant transferase superfamily. AcpS family. The cofactor is Mg(2+).

The protein localises to the cytoplasm. It catalyses the reaction apo-[ACP] + CoA = holo-[ACP] + adenosine 3',5'-bisphosphate + H(+). Functionally, transfers the 4'-phosphopantetheine moiety from coenzyme A to a Ser of acyl-carrier-protein. The chain is Holo-[acyl-carrier-protein] synthase from Oceanobacillus iheyensis (strain DSM 14371 / CIP 107618 / JCM 11309 / KCTC 3954 / HTE831).